Reading from the N-terminus, the 273-residue chain is MSGDKLLSELGYKLGRTIGEGSYSKVKVATSKKYKGTVAIKVVDRRRAPPDFVNKFLPRELSILRGVRHPHIVHVFEFIEVCNGKLYIVMEAAATDLLQAVQRNGRIPGVQARDLFAQIAGAVRYLHDHHLVHRDLKCENVLLSPDERRVKLTDFGFGRQAHGYPDLSTTYCGSAAYASPEVLLGIPYDPKKYDVWSMGVVLYVMVTGCMPFDDSDIAGLPRRQKRGVLYPEGLELSERCKALIAELLQFSPSARPSAGQVARNCWLRAGDSG.

The region spanning 12 to 267 (YKLGRTIGEG…AGQVARNCWL (256 aa)) is the Protein kinase domain. ATP-binding positions include 18-26 (IGEGSYSKV) and K41. Residue D135 is the Proton acceptor of the active site.

Belongs to the protein kinase superfamily. CAMK Ser/Thr protein kinase family. As to quaternary structure, microtubule inner protein component of sperm flagellar doublet microtubules. Interacts with HSP90; this interaction stabilizes and activates TSSK6. Interacts with the heat shock proteins HSPCB, HSPA8 and HSPA1A. These interactions appear to be required for TSSK6 kinase activity. Interacts with TSACC; this interaction is direct and recruits TSACC to HSP90, which is essential for kinase activity. The cofactor is Mg(2+). Autophosphorylated. Post-translationally, ubiquitinated; HSP90 activity negatively regulates ubiquitination and degradation. In terms of tissue distribution, highly expressed in testis. Expressed at lower levels in colon, small intestine, ovary, prostate, thymus, spleen and peripheral blood leukocytes.

Its subcellular location is the cytoplasm. The protein resides in the cytoskeleton. It is found in the flagellum axoneme. The protein localises to the nucleus. The enzyme catalyses L-seryl-[protein] + ATP = O-phospho-L-seryl-[protein] + ADP + H(+). It carries out the reaction L-threonyl-[protein] + ATP = O-phospho-L-threonyl-[protein] + ADP + H(+). In terms of biological role, serine/threonine-protein kinase component of the sperm flagellar doublet microtubules. May act as a regulator of sperm motility by mediating phosphorylation of sperm doublet microtubule proteins. Plays a role in DNA condensation during postmeiotic chromatin remodeling and histone-to-protamine transition during spermatogenesis. This is Testis-specific serine/threonine-protein kinase 6 from Homo sapiens (Human).